A 664-amino-acid chain; its full sequence is Peroxisomal acyl-coenzyme A oxidase 1 (664 aa).

Y135, Q137, T138, S144, G177, R310, Q330, R333, G401, and T422 together coordinate FAD. Catalysis depends on E424, which acts as the Proton acceptor. D426 contributes to the FAD binding site. C467 and C576 form a disulfide bridge. The short motif at 662–664 is the Microbody targeting signal element; the sequence is ARL.

Belongs to the acyl-CoA oxidase family. As to quaternary structure, homodimer. The cofactor is FAD. Expressed mainly in flowers and young seedlings. Lower expression in roots, leaves and bracts.

The protein localises to the peroxisome. It catalyses the reaction a 2,3-saturated acyl-CoA + O2 = a (2E)-enoyl-CoA + H2O2. In terms of biological role, catalyzes the desaturation of both long- and medium-chain acyl-CoAs to 2-trans-enoyl-CoAs. Most active with C14-CoA. Activity on long-chain mono-unsaturated substrates is 40% higher than with the corresponding saturated substrates. Seems to be an important factor in the general metabolism of root tips. May be involved in the biosynthesis of jasmonic acid. The sequence is that of Peroxisomal acyl-coenzyme A oxidase 1 from Arabidopsis thaliana (Mouse-ear cress).